We begin with the raw amino-acid sequence, 394 residues long: Olfactomedin-like protein 3B (394 aa).

Residues 1-18 form the signal peptide; it reads MKATIFFLLLTVLAHSRS. The stretch at 29-94 forms a coiled coil; the sequence is LENRMLAMEE…RVDRVEREMD (66 aa). One can recognise an Olfactomedin-like domain in the interval 132 to 383; it reads VCVNIISSLK…QILYKLELKK (252 aa). A disulfide bridge connects residues C133 and C310. Residues N169, N204, and N233 are each glycosylated (N-linked (GlcNAc...) asparagine).

It belongs to the OLFML3 family.

It localises to the secreted. Its function is as follows. Secreted scaffold protein that plays an essential role in dorsoventral patterning during early development. Stabilizes axial formation by restricting chordin (CHRD) activity on the dorsal side. Acts by facilitating the association between the tolloid proteases and their substrate chordin (CHRD), leading to enhance chordin (CHRD) degradation. In Danio rerio (Zebrafish), this protein is Olfactomedin-like protein 3B (olfml3b).